The chain runs to 88 residues: UPF0250 protein Sputcn32_2874 (88 aa).

The protein belongs to the UPF0250 family.

This chain is UPF0250 protein Sputcn32_2874, found in Shewanella putrefaciens (strain CN-32 / ATCC BAA-453).